A 362-amino-acid polypeptide reads, in one-letter code: Outer envelope protein 39, chloroplastic (362 aa).

The protein belongs to the OEP80 (TC 1.B.33.2) family. Expressed in germinating seeds. Expressed in the vasculature of roots, cotyledons and leaves.

The protein localises to the plastid. It is found in the chloroplast outer membrane. In terms of biological role, beta-barrel pore-forming protein which possesses voltage-dependent channel activity. Required for proper plastid development. Involved in the maintenance of metabolic homeostasis of full-grown plants. The polypeptide is Outer envelope protein 39, chloroplastic (Arabidopsis thaliana (Mouse-ear cress)).